The primary structure comprises 551 residues: Putative ABC transporter ATP-binding protein BA_3364/GBAA_3364/BAS3118 (551 aa).

2 ABC transporter domains span residues 5–243 and 293–525; these read AEIK…FRPF and LSAE…SINR. ATP is bound by residues 39–46 and 327–334; these read GGSGSGKT and GKNGTGKS.

It belongs to the ABC transporter superfamily.

Its subcellular location is the cell membrane. Probably part of an ABC transporter complex. Responsible for energy coupling to the transport system. This Bacillus anthracis protein is Putative ABC transporter ATP-binding protein BA_3364/GBAA_3364/BAS3118.